The sequence spans 207 residues: LexA repressor (207 aa).

The H-T-H motif DNA-binding region spans 28–48; that stretch reads RAEIAQKLGFKSANAAEEHLK. Catalysis depends on for autocatalytic cleavage activity residues S124 and K161.

It belongs to the peptidase S24 family. In terms of assembly, homodimer.

The catalysed reaction is Hydrolysis of Ala-|-Gly bond in repressor LexA.. In terms of biological role, represses a number of genes involved in the response to DNA damage (SOS response), including recA and lexA. In the presence of single-stranded DNA, RecA interacts with LexA causing an autocatalytic cleavage which disrupts the DNA-binding part of LexA, leading to derepression of the SOS regulon and eventually DNA repair. The chain is LexA repressor from Aeromonas hydrophila subsp. hydrophila (strain ATCC 7966 / DSM 30187 / BCRC 13018 / CCUG 14551 / JCM 1027 / KCTC 2358 / NCIMB 9240 / NCTC 8049).